A 240-amino-acid polypeptide reads, in one-letter code: LexA repressor (240 aa).

The H-T-H motif DNA-binding region spans phenylalanine 26–threonine 46. Residues serine 161 and lysine 199 each act as for autocatalytic cleavage activity in the active site.

Belongs to the peptidase S24 family. Homodimer.

The catalysed reaction is Hydrolysis of Ala-|-Gly bond in repressor LexA.. Functionally, represses a number of genes involved in the response to DNA damage (SOS response), including recA and lexA. In the presence of single-stranded DNA, RecA interacts with LexA causing an autocatalytic cleavage which disrupts the DNA-binding part of LexA, leading to derepression of the SOS regulon and eventually DNA repair. The chain is LexA repressor from Methylobacterium nodulans (strain LMG 21967 / CNCM I-2342 / ORS 2060).